Reading from the N-terminus, the 306-residue chain is WUSCHEL-related homeobox 13 (306 aa).

Pro residues predominate over residues 1 to 11 (MMALGVPPPPS). 3 disordered regions span residues 1–20 (MMAL…GPLR), 103–142 (PRSH…PRPE), and 190–276 (SRSK…ARAT). A compositionally biased stretch (basic and acidic residues) spans 126–142 (GEERVPDPKPRRNPRPE). Residues 132 to 196 (DPKPRRNPRP…NRKSRSKNKL (65 aa)) constitute a DNA-binding region (homeobox; WUS-type). A compositionally biased stretch (gly residues) spans 199–210 (GGTGRAGLGLGG). Positions 231–242 (FTPPPILPPQPV) are enriched in pro residues. Low complexity predominate over residues 243-270 (QPQQQLVSPVAAPTSLSSSSSDRSSGSS).

Belongs to the WUS homeobox family.

The protein resides in the nucleus. In terms of biological role, transcription factor which may be involved in developmental processes. This chain is WUSCHEL-related homeobox 13 (WOX13), found in Oryza sativa subsp. japonica (Rice).